The primary structure comprises 198 residues: MQFEVKDLINKIKKDGLEEAEKLASEIILNAKRDAEAIILKAESDAKELKMQAEKEAGEYKIHSLEASRQAVRDLIIATENNIKSLFKIALKDSVSEVYDDNFLRELIIRVVDIWSKKDKIDIILNESAVSNLLSILRVNIGNRLDDAIELKPFKGISKGFKIQQRDGNLYYDFTSDTIADILFEYLNPRFKEVIKLG.

The protein belongs to the V-ATPase E subunit family.

Functionally, produces ATP from ADP in the presence of a proton gradient across the membrane. The sequence is that of V-type proton ATPase subunit E from Borrelia hermsii (strain HS1 / DAH).